Consider the following 390-residue polypeptide: Galactokinase (390 aa).

33-36 (EHTD) is a binding site for substrate. ATP-binding positions include serine 67 and 124–130 (GSGLSSS). Residues serine 130 and glutamate 162 each contribute to the Mg(2+) site. Aspartate 174 serves as the catalytic Proton acceptor. Tyrosine 224 lines the substrate pocket.

Belongs to the GHMP kinase family. GalK subfamily.

The protein localises to the cytoplasm. The enzyme catalyses alpha-D-galactose + ATP = alpha-D-galactose 1-phosphate + ADP + H(+). It functions in the pathway carbohydrate metabolism; galactose metabolism. Catalyzes the transfer of the gamma-phosphate of ATP to D-galactose to form alpha-D-galactose-1-phosphate (Gal-1-P). This is Galactokinase from Streptococcus mutans serotype c (strain ATCC 700610 / UA159).